The following is a 281-amino-acid chain: 33 kDa chaperonin (281 aa).

Intrachain disulfides connect C229/C231 and C262/C265.

It belongs to the HSP33 family. Under oxidizing conditions two disulfide bonds are formed involving the reactive cysteines. Under reducing conditions zinc is bound to the reactive cysteines and the protein is inactive.

It localises to the cytoplasm. Redox regulated molecular chaperone. Protects both thermally unfolding and oxidatively damaged proteins from irreversible aggregation. Plays an important role in the bacterial defense system toward oxidative stress. The sequence is that of 33 kDa chaperonin from Pseudoalteromonas translucida (strain TAC 125).